Reading from the N-terminus, the 79-residue chain is Small cysteine-rich protein 2 (79 aa).

An N-terminal signal peptide occupies residues 1–21 (MRSQHVLILLLGLVCASQVLG). Residues 22–35 (KHLTKVKAKALHYD) constitute a propeptide that is removed on maturation.

The protein belongs to the Cnidaria small cysteine-rich protein (SCRiP) family. delta subfamily. Contains 4 disulfide bonds.

The protein localises to the secreted. It localises to the nematocyst. Functionally, this recombinant protein induces severe neurotoxicity on zebrafish larvae (Danio rerio) at a concentration of 230 mg/ml, but does not show toxicity when injected in blowfly larvae (Sarcophaga falculata). All fish incubated with this protein died within 200 minutes of exposure. Has also been claimed to be implied in calcification, but this function seems improbable. The chain is Small cysteine-rich protein 2 from Acropora millepora (Staghorn coral).